A 464-amino-acid chain; its full sequence is Hepatocyte nuclear factor 4-alpha (464 aa).

The segment at residues 57-132 is a DNA-binding region (nuclear receptor); sequence NSLCAICGDR…AGMKKEAVQN (76 aa). 2 consecutive NR C4-type zinc fingers follow at residues 60-80 and 96-120; these read CAIC…CDGC and CRFS…LKKC. The 230-residue stretch at 147–376 folds into the NR LBD domain; sequence SSLPSINVLI…NLLQEMLLGG (230 aa). The short motif at 367 to 375 is the 9aaTAD element; the sequence is NLLQEMLLG. Positions 410–421 are enriched in polar residues; sequence SQLHNGQMSTPE. Residues 410–433 are disordered; that stretch reads SQLHNGQMSTPETPQPSPPAGSGA.

The protein belongs to the nuclear hormone receptor family. NR2 subfamily. Homodimerization is required for HNF4-alpha to bind to its recognition site. Expressed in liver and kidney.

The protein localises to the nucleus. Transcriptional regulator; binds and activates the promoter for the HNF1-alpha gene. Potential initiator of a transcriptional cascade within a subset of cells committed to a specific developmental program. Could be a determinant for asymmetry in early development. May play a role in the regulation of the circadian clock. The chain is Hepatocyte nuclear factor 4-alpha (hnf4a) from Xenopus laevis (African clawed frog).